Reading from the N-terminus, the 124-residue chain is Snake venom vascular endothelial growth factor toxin apiscin (124 aa).

An N-terminal signal peptide occupies residues 1-24 (MAAYLLAVAILFCIQGWPSGTVQG). Residue glutamine 25 is modified to Pyrrolidone carboxylic acid. 3 disulfide bridges follow: cysteine 38-cysteine 80, cysteine 69-cysteine 115, and cysteine 73-cysteine 117.

Belongs to the PDGF/VEGF growth factor family. Snake venom VEGF subfamily. Homodimer; disulfide-linked. Interacts with VEGF receptor-1 (FLT1) with a high affinity, whereas it binds to VEGF receptor-2 (KDR) with a low affinity. Does not bind VEGF receptor-3 (FLT4). Expressed by the venom gland.

It is found in the secreted. Its function is as follows. Snake venom VEGFs that may contribute to venom dispersion and prey subjugation by inducing vascular permeability and hypotension. This protein induces an increase in capillary permeability after intradermal injection, as well as a drastic hypotensive effect after intravenous injection. The hypotension is mediated by nitric oxide (NO), which is produced by VEGF-activated endothelium NO synthase. Also induces angiogenesis in vitro. Like other crotalid VEGFs, this protein interacts with VEGF receptor-1 (FLT1) with a high affinity, whereas it binds to VEGF receptor-2 (KDR) with a low affinity. In Agkistrodon piscivorus piscivorus (Eastern cottonmouth), this protein is Snake venom vascular endothelial growth factor toxin apiscin.